We begin with the raw amino-acid sequence, 68 residues long: Large ribosomal subunit protein bL33c (68 aa).

This sequence belongs to the bacterial ribosomal protein bL33 family.

The protein resides in the plastid. This is Large ribosomal subunit protein bL33c from Cuscuta reflexa (Southern Asian dodder).